The sequence spans 117 residues: DNA-directed RNA polymerase subunit omega (117 aa).

This sequence belongs to the RNA polymerase subunit omega family. In terms of assembly, the RNAP catalytic core consists of 2 alpha, 1 beta, 1 beta' and 1 omega subunit. When a sigma factor is associated with the core the holoenzyme is formed, which can initiate transcription.

The enzyme catalyses RNA(n) + a ribonucleoside 5'-triphosphate = RNA(n+1) + diphosphate. In terms of biological role, promotes RNA polymerase assembly. Latches the N- and C-terminal regions of the beta' subunit thereby facilitating its interaction with the beta and alpha subunits. This Jannaschia sp. (strain CCS1) protein is DNA-directed RNA polymerase subunit omega.